Consider the following 261-residue polypeptide: Acidic leucine-rich nuclear phosphoprotein 32 family member A (261 aa).

4 LRR repeats span residues 16-37 (QITE…TDEY), 39-60 (ALES…PKLP), 61-83 (NLKK…TTSP), and 84-105 (KLQY…KPLE). The region spanning 118 to 156 (NDATQVDNYREKIFKMLPSLNFLDGFDCNDEEVQSDGDD) is the LRRCT domain. 2 stretches are compositionally biased toward acidic residues: residues 145 to 185 (CNDE…EEAN) and 194 to 229 (YNDD…DGDA). The tract at residues 145-261 (CNDEEVQSDG…VRGKKRKHDG (117 aa)) is disordered. The segment covering 238 to 252 (AKDKDGEKEADESQV) has biased composition (basic and acidic residues).

It belongs to the ANP32 family. Post-translationally, phosphorylated on serine residues.

The protein resides in the nucleus. Its subcellular location is the cytoplasm. Implicated in a number of cellular processes, including proliferation, differentiation, caspase-dependent and caspase-independent apoptosis, suppression of transformation (tumor suppressor), inhibition of protein phosphatase 2A, regulation of mRNA trafficking and stability, and inhibition of acetyltransferases as part of the INHAT (inhibitor of histone acetyltransferases) complex. This chain is Acidic leucine-rich nuclear phosphoprotein 32 family member A (Anp32a), found in Drosophila melanogaster (Fruit fly).